We begin with the raw amino-acid sequence, 191 residues long: MSVRVARIGKPHGVRGEVTVELFTDDPQARFAPGSVLSIQHARGGRRGQGSAADAREPLAVQSLTVTGHRWNKDVLVARFEEISDRNAAEAARGLELFAEVADLPLEDDEWHQDDLLGLVAVDLTRGEARIGTVKALIQGSAQDLLEITPQGGGRTVLVPFVEEIVPEVDLDRGLVLVSPPPGLLELGEGE.

The region spanning 107 to 184 (EDDEWHQDDL…LVLVSPPPGL (78 aa)) is the PRC barrel domain.

It belongs to the RimM family. Binds ribosomal protein uS19.

The protein localises to the cytoplasm. An accessory protein needed during the final step in the assembly of 30S ribosomal subunit, possibly for assembly of the head region. Essential for efficient processing of 16S rRNA. May be needed both before and after RbfA during the maturation of 16S rRNA. It has affinity for free ribosomal 30S subunits but not for 70S ribosomes. The sequence is that of Ribosome maturation factor RimM from Kocuria rhizophila (strain ATCC 9341 / DSM 348 / NBRC 103217 / DC2201).